A 436-amino-acid chain; its full sequence is GTPase Obg (436 aa).

Residues 2-160 (SMFLDTAKVS…RELALELKIL (159 aa)) form the Obg domain. Residues 161 to 338 (ADVGLVGFPS…LLDATAQLLA (178 aa)) enclose the OBG-type G domain. GTP contacts are provided by residues 167 to 174 (GFPSVGKS), 192 to 196 (FTTIV), 214 to 217 (DLPG), 284 to 287 (NKMD), and 319 to 321 (SGI). The Mg(2+) site is built by Ser174 and Thr194. Residues 358–436 (GFEEEEKAFD…IGKFEFEFVD (79 aa)) form the OCT domain.

Belongs to the TRAFAC class OBG-HflX-like GTPase superfamily. OBG GTPase family. As to quaternary structure, monomer. It depends on Mg(2+) as a cofactor.

The protein resides in the cytoplasm. In terms of biological role, an essential GTPase which binds GTP, GDP and possibly (p)ppGpp with moderate affinity, with high nucleotide exchange rates and a fairly low GTP hydrolysis rate. Plays a role in control of the cell cycle, stress response, ribosome biogenesis and in those bacteria that undergo differentiation, in morphogenesis control. The chain is GTPase Obg from Streptococcus mutans serotype c (strain ATCC 700610 / UA159).